A 447-amino-acid chain; its full sequence is Cytochrome c biogenesis protein CcsB (447 aa).

The next 3 helical transmembrane spans lie at 28–48 (LRLAIILLLLIAIFSISGTVI), 87–107 (TWWYLSLLILFGSSLTACTFR), and 173–193 (IGPIIVHAAMLIILAGAIWGA).

Belongs to the Ccs1/CcsB family. May interact with CcsA.

Its subcellular location is the cellular thylakoid membrane. In terms of biological role, required during biogenesis of c-type cytochromes (cytochrome c6 and cytochrome f) at the step of heme attachment. In Microcystis aeruginosa (strain NIES-843 / IAM M-2473), this protein is Cytochrome c biogenesis protein CcsB.